Consider the following 444-residue polypeptide: Trigger factor (444 aa).

In terms of domain architecture, PPIase FKBP-type spans 166–251 (GDQIVIDFKG…VKAVKAPKAA (86 aa)).

This sequence belongs to the FKBP-type PPIase family. Tig subfamily.

It is found in the cytoplasm. It catalyses the reaction [protein]-peptidylproline (omega=180) = [protein]-peptidylproline (omega=0). Its function is as follows. Involved in protein export. Acts as a chaperone by maintaining the newly synthesized protein in an open conformation. Functions as a peptidyl-prolyl cis-trans isomerase. In Paracoccus denitrificans (strain Pd 1222), this protein is Trigger factor.